Consider the following 953-residue polypeptide: Translation initiation factor IF-2 (953 aa).

Disordered regions lie at residues 52–247 and 279–363; these read KASK…LAEL and TKLK…TERK. Composition is skewed to basic and acidic residues over residues 80–89, 98–111, and 140–188; these read TGSEHVEKTQ, FKAEREARAKEQAA, and QGDK…ENHK. Residues 191 to 207 show a composition bias toward polar residues; sequence RFTNQKKQGRQEPQSKS. Over residues 229–247 the composition is skewed to basic and acidic residues; the sequence is RQSETRFRAQQEAKRLAEL. Positions 282–291 are enriched in polar residues; it reads KSSNISAKST. Over residues 300–317 the composition is skewed to basic and acidic residues; the sequence is ARPEKNRELTHHSQEGQK. A compositionally biased stretch (low complexity) spans 322-338; that stretch reads SWNSQNQVRNQKNSNWN. Residues 339–348 are compositionally biased toward basic residues; the sequence is KNKKTKKGKN. The tr-type G domain maps to 454–623; that stretch reads ERAPVVTIMG…LLVAEVEELK (170 aa). The G1 stretch occupies residues 463-470; that stretch reads GHVDHGKT. 463 to 470 serves as a coordination point for GTP; that stretch reads GHVDHGKT. The interval 488-492 is G2; sequence GITQH. Positions 509 to 512 are G3; it reads DTPG. Residues 509–513 and 563–566 each bind GTP; these read DTPGH and NKID. The segment at 563–566 is G4; the sequence is NKID. The interval 599–601 is G5; the sequence is SAK.

This sequence belongs to the TRAFAC class translation factor GTPase superfamily. Classic translation factor GTPase family. IF-2 subfamily.

The protein localises to the cytoplasm. Its function is as follows. One of the essential components for the initiation of protein synthesis. Protects formylmethionyl-tRNA from spontaneous hydrolysis and promotes its binding to the 30S ribosomal subunits. Also involved in the hydrolysis of GTP during the formation of the 70S ribosomal complex. This is Translation initiation factor IF-2 from Streptococcus pyogenes serotype M5 (strain Manfredo).